A 210-amino-acid chain; its full sequence is 3-hexulose-6-phosphate synthase (210 aa).

It belongs to the HPS/KGPDC family. HPS subfamily.

The enzyme catalyses D-ribulose 5-phosphate + formaldehyde = D-arabino-hex-3-ulose 6-phosphate. Its pathway is one-carbon metabolism; formaldehyde assimilation via RuMP pathway; D-fructose 6-phosphate from D-ribulose 5-phosphate and formaldehyde: step 1/2. Functionally, catalyzes the condensation of ribulose 5-phosphate with formaldehyde to form 3-hexulose 6-phosphate. Together with HxlB, may act as a formaldehyde detoxification system. The sequence is that of 3-hexulose-6-phosphate synthase (hxlA) from Bacillus subtilis (strain 168).